Here is a 227-residue protein sequence, read N- to C-terminus: MKKKSISLLYLISIVFLPWCISFTFKKSLESWFINWWNTSQSEIFLNDIKEKSILKKFIELKELFFLDDMLKECPKTYLQNLRTGIYKETIQLIKTHNEDRMNTILHFSTNIICFFILSGYSILGNQELILINSLVREFIYNLSDTIKAFSILLLTDLCIGFHSTRGWELIMGFVSKDFGFAQNDQIISGLVSTFPVILDTIFKYWIFRYLNRISPSLVVIYHSMND.

4 helical membrane passes run 5-25, 112-132, 143-163, and 187-207; these read SISL…SFTF, IICF…LILI, LSDT…IGFH, and IISG…KYWI.

The protein belongs to the CemA family.

It is found in the plastid. It localises to the chloroplast inner membrane. It catalyses the reaction K(+)(in) + H(+)(out) = K(+)(out) + H(+)(in). Functionally, contributes to K(+)/H(+) antiport activity by supporting proton efflux to control proton extrusion and homeostasis in chloroplasts in a light-dependent manner to modulate photosynthesis. Prevents excessive induction of non-photochemical quenching (NPQ) under continuous-light conditions. Indirectly promotes efficient inorganic carbon uptake into chloroplasts. This chain is Potassium/proton antiporter CemA, found in Phaseolus vulgaris (Kidney bean).